A 588-amino-acid chain; its full sequence is Succinate dehydrogenase flavoprotein subunit (588 aa).

FAD-binding positions include 14–19, 37–52, and Asp221; these read GAGGAG and SKVF…AQGG. Tele-8alpha-FAD histidine is present on His45. Substrate contacts are provided by His242 and Thr254. Lys267 is modified (N6-acetyllysine). Arg286 acts as the Proton acceptor in catalysis. A substrate-binding site is contributed by His354. FAD is bound at residue Glu388. Substrate is bound at residue Arg399. FAD is bound at residue 404 to 405; that stretch reads SL.

It belongs to the FAD-dependent oxidoreductase 2 family. FRD/SDH subfamily. As to quaternary structure, part of an enzyme complex containing four subunits: a flavoprotein, an iron-sulfur, cytochrome b-556, and a hydrophobic anchor protein. The complex forms trimers. Requires FAD as cofactor.

It is found in the cell inner membrane. The enzyme catalyses a quinone + succinate = fumarate + a quinol. The protein operates within carbohydrate metabolism; tricarboxylic acid cycle; fumarate from succinate (bacterial route): step 1/1. In terms of biological role, two distinct, membrane-bound, FAD-containing enzymes are responsible for the catalysis of fumarate and succinate interconversion; the fumarate reductase is used in anaerobic growth, and the succinate dehydrogenase is used in aerobic growth. This Escherichia coli O157:H7 protein is Succinate dehydrogenase flavoprotein subunit (sdhA).